Here is a 472-residue protein sequence, read N- to C-terminus: Glycerol-3-phosphate acyltransferase, chloroplastic (472 aa).

Residues 1–102 (MLVLSSSAPP…EIPVKKEDDN (102 aa)) constitute a chloroplast transit peptide. An HXXXXD motif motif is present at residues 241 to 246 (HQSEAD).

It belongs to the GPAT/DAPAT family.

It localises to the plastid. Its subcellular location is the chloroplast stroma. It carries out the reaction sn-glycerol 3-phosphate + an acyl-CoA = a 1-acyl-sn-glycero-3-phosphate + CoA. The protein operates within phospholipid metabolism; CDP-diacylglycerol biosynthesis; CDP-diacylglycerol from sn-glycerol 3-phosphate: step 1/3. Its function is as follows. Esterifies acyl-group from acyl-ACP to the sn-1 position of glycerol-3-phosphate. The enzyme from chilling-resistant plants discriminates against non-fluid palmitic acid and selects oleic acid whereas the enzyme from sensitive plants accepts both fatty acids. This is an oleate-selective acyltransferase. The chain is Glycerol-3-phosphate acyltransferase, chloroplastic (GAT) from Spinacia oleracea (Spinach).